A 377-amino-acid chain; its full sequence is Alanine racemase (377 aa).

The Proton acceptor; specific for D-alanine role is filled by Lys-37. The residue at position 37 (Lys-37) is an N6-(pyridoxal phosphate)lysine. Arg-135 lines the substrate pocket. Tyr-271 (proton acceptor; specific for L-alanine) is an active-site residue. Met-319 contributes to the substrate binding site.

It belongs to the alanine racemase family. Requires pyridoxal 5'-phosphate as cofactor.

It carries out the reaction L-alanine = D-alanine. The protein operates within amino-acid biosynthesis; D-alanine biosynthesis; D-alanine from L-alanine: step 1/1. Functionally, catalyzes the interconversion of L-alanine and D-alanine. May also act on other amino acids. The polypeptide is Alanine racemase (alr) (Helicobacter acinonychis (strain Sheeba)).